The primary structure comprises 806 residues: Phenylalanine--tRNA ligase beta subunit (806 aa).

Residues 44–158 (ADGLSKLVVG…EEAVPGDAIF (115 aa)) enclose the tRNA-binding domain. Residues 411–486 (TEPVEVSTSL…RIYGYDKLPT (76 aa)) enclose the B5 domain. 4 residues coordinate Mg(2+): D464, D470, E473, and E474. An FDX-ACB domain is found at 713-806 (TKFPAMTRDV…LTEQVGAEVR (94 aa)).

The protein belongs to the phenylalanyl-tRNA synthetase beta subunit family. Type 1 subfamily. As to quaternary structure, tetramer of two alpha and two beta subunits. Mg(2+) is required as a cofactor.

It is found in the cytoplasm. It catalyses the reaction tRNA(Phe) + L-phenylalanine + ATP = L-phenylalanyl-tRNA(Phe) + AMP + diphosphate + H(+). The polypeptide is Phenylalanine--tRNA ligase beta subunit (Streptococcus pyogenes serotype M28 (strain MGAS6180)).